The following is a 426-amino-acid chain: Enolase 1 (426 aa).

Position 163 (Gln-163) interacts with (2R)-2-phosphoglycerate. Glu-205 (proton donor) is an active-site residue. The Mg(2+) site is built by Asp-242, Glu-283, and Asp-310. Positions 335, 364, 365, and 386 each coordinate (2R)-2-phosphoglycerate. Lys-335 acts as the Proton acceptor in catalysis.

It belongs to the enolase family. Mg(2+) serves as cofactor.

The protein resides in the cytoplasm. The protein localises to the secreted. Its subcellular location is the cell surface. The enzyme catalyses (2R)-2-phosphoglycerate = phosphoenolpyruvate + H2O. Its pathway is carbohydrate degradation; glycolysis; pyruvate from D-glyceraldehyde 3-phosphate: step 4/5. Its function is as follows. Catalyzes the reversible conversion of 2-phosphoglycerate (2-PG) into phosphoenolpyruvate (PEP). It is essential for the degradation of carbohydrates via glycolysis. The sequence is that of Enolase 1 from Streptomyces coelicolor (strain ATCC BAA-471 / A3(2) / M145).